A 408-amino-acid chain; its full sequence is Multidrug resistance protein MdtG (408 aa).

11 consecutive transmembrane segments (helical) span residues 16–36, 58–78, 92–112, 115–135, 146–166, 173–193, 224–244, 256–276, 290–310, 319–339, and 378–398; these read LIVA…VMPF, IVFS…GGLA, LGMG…QFLI, ALLG…ATQV, TLST…GLLA, PVFF…LFCI, LFVT…ILTL, VAFI…LSAP, ILIT…YVQT, FLLG…LVYN, and AVFL…WNSL.

This sequence belongs to the major facilitator superfamily. DHA1 family. MdtG (TC 2.A.1.2.20) subfamily.

It is found in the cell inner membrane. Functionally, confers resistance to fosfomycin and deoxycholate. In Escherichia coli O7:K1 (strain IAI39 / ExPEC), this protein is Multidrug resistance protein MdtG.